The sequence spans 546 residues: Glutamate--tRNA ligase (546 aa).

Positions 42 to 52 (PSPTGFIHLGN) match the 'HIGH' region motif. The 'KMSKS' region motif lies at 293-297 (KLSKR). K296 is an ATP binding site.

This sequence belongs to the class-I aminoacyl-tRNA synthetase family. Glutamate--tRNA ligase type 1 subfamily. As to quaternary structure, monomer.

Its subcellular location is the cytoplasm. The catalysed reaction is tRNA(Glu) + L-glutamate + ATP = L-glutamyl-tRNA(Glu) + AMP + diphosphate. Its function is as follows. Catalyzes the attachment of glutamate to tRNA(Glu) in a two-step reaction: glutamate is first activated by ATP to form Glu-AMP and then transferred to the acceptor end of tRNA(Glu). The polypeptide is Glutamate--tRNA ligase (Acetivibrio thermocellus (strain ATCC 27405 / DSM 1237 / JCM 9322 / NBRC 103400 / NCIMB 10682 / NRRL B-4536 / VPI 7372) (Clostridium thermocellum)).